A 181-amino-acid polypeptide reads, in one-letter code: Ninjurin-B (181 aa).

Basic and acidic residues predominate over residues Met-1–Leu-10. The segment at Met-1–Ser-72 is disordered. Over Met-1 to Tyr-115 the chain is Extracellular. Residues Asp-12 to Gly-26 show a composition bias toward polar residues. The span at Arg-33–Phe-49 shows a compositional bias: basic and acidic residues. Residues Asn-80 to Ala-91 form a helix alpha1 region. A helix alpha2 region spans residues Ser-94 to Ala-110. A helical membrane pass occupies residues Ser-116–Phe-136. Over Lys-137–Asp-153 the chain is Cytoplasmic. A helical transmembrane segment spans residues Leu-154–Thr-174. Residues Thr-175 to His-181 lie on the Extracellular side of the membrane.

It belongs to the ninjurin family.

It localises to the membrane. Effector of non-apoptotic necrotic cell death that mediates plasma membrane rupture (cytolysis): oligomerizes in response to death stimuli and promotes plasma membrane rupture by introducing hydrophilic faces of 2 alpha helices into the hydrophobic membrane, leading to release intracellular molecules that propagate the inflammatory response. Also acts as a homophilic transmembrane adhesion molecule that promotes cell adhesion by mediating homophilic interactions via its extracellular region. This Drosophila melanogaster (Fruit fly) protein is Ninjurin-B.